A 243-amino-acid polypeptide reads, in one-letter code: Polycomb group RING finger protein 1 (243 aa).

Lysine 12 participates in a covalent cross-link: Glycyl lysine isopeptide (Lys-Gly) (interchain with G-Cter in SUMO2). The RING-type zinc finger occupies 35 to 74 (CCLCAGYFVDATTITECLHTFCKSCIVKYLQTSKYCPMCN). The segment at 74 to 231 (NIKIHETQPL…LSRWFGKPSP (158 aa)) is necessary for repressor activity. Lysine 76 participates in a covalent cross-link: Glycyl lysine isopeptide (Lys-Gly) (interchain with G-Cter in SUMO2). The required for the interaction with the KDM2B-SKP1 heterodimeric complex stretch occupies residues 138–239 (LPFTSFDHYY…SPLLLQYSVK (102 aa)). An RING-finger and WD40-associated ubiquitin-like domain (RAWUL); sufficient for interaction with BCOR and BCORL1 region spans residues 151–239 (EQLSLCLERL…SPLLLQYSVK (89 aa)).

In terms of assembly, interacts with BCORL1, forming heterodimers. The PCGF1-BCORL1 heterodimeric complex interacts with the KDM2B-SKP1 heterodimeric complex to form a homotetrameric polycomb repression complex 1 (PRC1.1). Component of the repressive BCOR complex containing a Polycomb group subcomplex at least composed of RYBP, RING1 and RNF2/RING2. Specifically interacts with BCOR, RING1 and RNF2/RING2. Component of a PRC1-like complex. Interacts with CBX6, CBX7 and CBX8. Interacts with DPPA4, NANOG, POU5F1 and RYBP. As to expression, highly expressed in brain, cerebellum, heart and testis.

Its subcellular location is the nucleus. Functionally, component of the Polycomb group (PcG) multiprotein BCOR complex, a complex required to maintain the transcriptionally repressive state of some genes, such as BCL6 and the cyclin-dependent kinase inhibitor, CDKN1A. Transcriptional repressor that may be targeted to the DNA by BCL6; this transcription repressor activity may be related to PKC signaling pathway. Represses CDKN1A expression by binding to its promoter, and this repression is dependent on the retinoic acid response element (RARE element). Promotes cell cycle progression and enhances cell proliferation as well. May have a positive role in tumor cell growth by down-regulating CDKN1A. Component of a Polycomb group (PcG) multiprotein PRC1-like complex, a complex class required to maintain the transcriptionally repressive state of many genes, including Hox genes, throughout development. PcG PRC1 complex acts via chromatin remodeling and modification of histones; it mediates monoubiquitination of histone H2A 'Lys-119', rendering chromatin heritably changed in its expressibility. Within the PRC1-like complex, regulates RNF2 ubiquitin ligase activity. Regulates the expression of DPPA4 and NANOG in the NT2 embryonic carcinoma cells. The chain is Polycomb group RING finger protein 1 (Pcgf1) from Rattus norvegicus (Rat).